The chain runs to 179 residues: Peptidyl-tRNA hydrolase (179 aa).

Residue tyrosine 15 participates in tRNA binding. The active-site Proton acceptor is histidine 20. Positions 66, 68, and 114 each coordinate tRNA.

This sequence belongs to the PTH family. Monomer.

It is found in the cytoplasm. The catalysed reaction is an N-acyl-L-alpha-aminoacyl-tRNA + H2O = an N-acyl-L-amino acid + a tRNA + H(+). Hydrolyzes ribosome-free peptidyl-tRNAs (with 1 or more amino acids incorporated), which drop off the ribosome during protein synthesis, or as a result of ribosome stalling. Its function is as follows. Catalyzes the release of premature peptidyl moieties from peptidyl-tRNA molecules trapped in stalled 50S ribosomal subunits, and thus maintains levels of free tRNAs and 50S ribosomes. The protein is Peptidyl-tRNA hydrolase of Chlamydia muridarum (strain MoPn / Nigg).